We begin with the raw amino-acid sequence, 388 residues long: Chalcone synthase LF3 (388 aa).

Cysteine 164 is an active-site residue.

The protein belongs to the thiolase-like superfamily. Chalcone/stilbene synthases family.

It carries out the reaction (E)-4-coumaroyl-CoA + 3 malonyl-CoA + 3 H(+) = 2',4,4',6'-tetrahydroxychalcone + 3 CO2 + 4 CoA. Its pathway is secondary metabolite biosynthesis; flavonoid biosynthesis. Its function is as follows. The primary product of this enzyme is 4,2',4',6'-tetrahydroxychalcone (also termed naringenin-chalcone or chalcone) which can under specific conditions spontaneously isomerize into naringenin. The protein is Chalcone synthase LF3 (CHS-LF3) of Ipomoea batatas (Sweet potato).